We begin with the raw amino-acid sequence, 430 residues long: MWRLVPLKLGRLSRALKLAALGSLLVLMLLHSPSLLASWQRNELADRRFLQLNKCPACFGTSWCRRFLNGQVGFETWGRLRLLDFLNVKNVYFAQYGEPREGGRRRVVLKRLGSQRELAQLDQSICKRATGRPRCDLLQAMPRTEFARLNGDVRLLTPEAVEGWSDLVHCPSQRLLDRLVRRYAETKDSGSFLLRNLKDSERMQLLLTLAFNPEPLVLQSFPSDEGWPFAKYLGACGRMVAVNYVGEELWSYFNAPWEKRVDLAWQLMEIAEQLTNNDFEFALYLLDVSFDNFAVGPRDGKVIIVDAENVLVADKRLIRQNKPENWDVWYESKFDDCDKEACLSFSKEILCARVTVDHNYYAVCQNLLSRHATWRGTSGGLLHDPPSEIAKDGRLEALLDECTNPKKRYGRFQAAKELRGYLAQLSHNVR.

Positions 1–35 are cleaved as a signal peptide; sequence MWRLVPLKLGRLSRALKLAALGSLLVLMLLHSPSL.

The protein belongs to the DIPK family. In terms of tissue distribution, expressed in heart, brain, liver, spleen, kidney, lung, thymus, testis, ovary and muscle.

It is found in the golgi apparatus. Its subcellular location is the cytoplasmic vesicle. The protein localises to the COPI-coated vesicle. The protein resides in the secreted. Its function is as follows. May play a role in cardiomyocyte proliferation through paracrine signaling and activation of the PI3-kinase signaling cascade. The chain is Divergent protein kinase domain 2A (Dipk2a) from Mus musculus (Mouse).